We begin with the raw amino-acid sequence, 152 residues long: Mediator of RNA polymerase II transcription subunit 9 (152 aa).

Positions 98 to 150 form a coiled coil; the sequence is IKRCKALLQENEEVRNLLANSIEEWENIIADKEQQLRVKAKVLRDLDARIEKI.

The protein belongs to the Mediator complex subunit 9 family. As to quaternary structure, component of the Mediator complex.

The protein localises to the nucleus. In terms of biological role, component of the Mediator complex, a coactivator involved in the regulated transcription of nearly all RNA polymerase II-dependent genes. Mediator functions as a bridge to convey information from gene-specific regulatory proteins to the basal RNA polymerase II transcription machinery. Mediator is recruited to promoters by direct interactions with regulatory proteins and serves as a scaffold for the assembly of a functional preinitiation complex with RNA polymerase II and the general transcription factors. The chain is Mediator of RNA polymerase II transcription subunit 9 (CSE2) from Candida glabrata (strain ATCC 2001 / BCRC 20586 / JCM 3761 / NBRC 0622 / NRRL Y-65 / CBS 138) (Yeast).